Here is a 118-residue protein sequence, read N- to C-terminus: Large ribosomal subunit protein uL18 (118 aa).

It belongs to the universal ribosomal protein uL18 family. In terms of assembly, part of the 50S ribosomal subunit; part of the 5S rRNA/L5/L18/L25 subcomplex. Contacts the 5S and 23S rRNAs.

Its function is as follows. This is one of the proteins that bind and probably mediate the attachment of the 5S RNA into the large ribosomal subunit, where it forms part of the central protuberance. This is Large ribosomal subunit protein uL18 from Rickettsia bellii (strain OSU 85-389).